The following is a 330-amino-acid chain: Serine/threonine-protein phosphatase PP1-alpha catalytic subunit (330 aa).

The residue at position 2 (Ser2) is an N-acetylserine. 2 positions are modified to phosphoserine: Ser2 and Ser22. Asp64, His66, Asp92, and Asn124 together coordinate Mn(2+). His125 serves as the catalytic Proton donor. His173 and His248 together coordinate Mn(2+). Residue Lys305 is modified to N6-acetyllysine. Position 306 is a phosphotyrosine (Tyr306). Residues 306–330 are disordered; sequence YGQFSGLNPGGRPITPPRNSAKAKK. Thr320 bears the Phosphothreonine mark. At Ser325 the chain carries Phosphoserine.

The protein belongs to the PPP phosphatase family. PP-1 subfamily. As to quaternary structure, PP1 comprises a catalytic subunit, PPP1CA, PPP1CB or PPP1CC, which is folded into its native form by inhibitor 2 and glycogen synthetase kinase 3, and then complexed to one or several targeting or regulatory subunits. PPP1R12A, PPP1R12B and PPP1R12C mediate binding to myosin. PPP1R3A (in skeletal muscle), PPP1R3B (in liver), PPP1R3C, PPP1R3D and PPP1R3F (in brain) mediate binding to glycogen. Interacts with PPP1R15A and PPP1R15B; the interactions mediate binding to EIF2S1. Part of a complex containing PPP1R15B, PP1 and NCK1/2. Interacts with PPP1R9A, PPP1R9B and PPP1R7. Interacts with YLPM1. Forms a complex with ILF2, ILF3, YLPM1, KHDRBS1, RBMX and NCOA5. Interacts with NOM1 and PPP1R8. Interacts with PPP1R16B. Interacts with RPSA only in the presence of PPP1R16B. Component of the PNUTS-PP1 phosphatase complex, composed of PPP1R10/PNUTS, TOX4, WDR82, and PPP1CA or PPP1CB or PPP1CC. Interacts with PPP1R10/PNUTS and PPP1R8. Interacts with WDR82 in the presence of PPP1R10/PNUTS. Interacts with PPP1R39. transition from mitosis into interphase. Interacts with TRIM28; the interaction dephosphorylates TRIM28 on 'Ser-824' and forms a complex at the p21 promoter site. Interacts with NEK2. Interacts with PHACTR4; which acts as an activator of PP1 activity. Interacts with FER; this promotes phosphorylation at Thr-320. Interacts with BTBD10. Interacts with KCTD20. Interacts with FOXP3. Interacts with CENPA. Interacts with ATG16L1. Found in a complex with PPP1CA, PPP1CC, SHC1 and PEAK1. Interacts with tensin TNS1. Interacts with SAXO4, PPP1R21, PPP1R26, PPP1R27, PPP1R35, PPP1R36, PPP1R37, SH3RF2, ELFN1 and ELFN2. Interacts with TPRN; the interaction results in inhibition of PPC1A phosphatase activity. Interacts with SKA1 (via C-terminus); the interaction is direct and required for the recruitment of PP1 to the kinetochore. Interacts with the KNL1 complex subunit KNL1; the interaction is direct and mutually exclusive with KNL1 binding to microtubules. Component of the SHOC2-MRAS-PP1c (SMP) complex consisting of SHOC2, GTP-bound M-Ras/MRAS and the catalytic subunit of protein phosphatase 1 (either PPP1CA, PPP1CB or PPP1CC). SHOC2 and PP1c preferably bind M-Ras/MRAS, but they also bind K-Ras/KRAS, N-Ras/NRAS and H-Ras/HRAS; these interactions are GTP-dependent and both SHOC2 and PP1c are required to form a stable complex. Interacts with SHOC2 in the absence of Ras GTPases. It depends on Mn(2+) as a cofactor. Phosphorylated. Dephosphorylated at Thr-320 in the presence of ionizing radiation.

It is found in the cytoplasm. Its subcellular location is the nucleus. It localises to the nucleoplasm. The protein resides in the nucleolus. The enzyme catalyses O-phospho-L-seryl-[protein] + H2O = L-seryl-[protein] + phosphate. It catalyses the reaction O-phospho-L-threonyl-[protein] + H2O = L-threonyl-[protein] + phosphate. Protein phosphatase that associates with over 200 regulatory proteins to form highly specific holoenzymes which dephosphorylate hundreds of biological targets. Protein phosphatase 1 (PP1) is essential for cell division, transcription elongation, and participates in the regulation of glycogen metabolism, muscle contractility and protein synthesis. Involved in regulation of ionic conductances and long-term synaptic plasticity. May play an important role in dephosphorylating substrates such as the postsynaptic density-associated Ca(2+)/calmodulin dependent protein kinase II. Catalytic component of the PNUTS-PP1 protein phosphatase complex, a protein phosphatase 1 (PP1) complex that promotes RNA polymerase II transcription pause-release, allowing transcription elongation: the PNUTS-PP1 complex mediates the release of RNA polymerase II from promoter-proximal region of genes by catalyzing dephosphorylation of proteins involved in transcription, such as AFF4, CDK9, MEPCE, INTS12, NCBP1, POLR2M/GDOWN1 and SUPT6H. The PNUTS-PP1 complex also regulates transcription termination by mediating dephosphorylation of SUPT5H in termination zones downstream of poly(A) sites, thereby promoting deceleration of RNA polymerase II transcription. PNUTS-PP1 complex is also involved in the response to replication stress by mediating dephosphorylation of POLR2A at 'Ser-5' of the CTD, promoting RNA polymerase II degradation. PNUTS-PP1 also plays a role in the control of chromatin structure and cell cycle progression during the transition from mitosis into interphase. Regulates NEK2 function in terms of kinase activity and centrosome number and splitting, both in the presence and absence of radiation-induced DNA damage. Regulator of neural tube and optic fissure closure, and enteric neural crest cell (ENCCs) migration during development. In balance with CSNK1D and CSNK1E, determines the circadian period length, through the regulation of the speed and rhythmicity of PER1 and PER2 phosphorylation. May dephosphorylate CSNK1D and CSNK1E. Dephosphorylates the 'Ser-418' residue of FOXP3 in regulatory T-cells (Treg) from patients with rheumatoid arthritis, thereby inactivating FOXP3 and rendering Treg cells functionally defective. Dephosphorylates CENPA. Dephosphorylates the 'Ser-139' residue of ATG16L1 causing dissociation of ATG12-ATG5-ATG16L1 complex, thereby inhibiting autophagy. Together with PPP1CC (PP1-gamma subunit), dephosphorylates IFIH1/MDA5 and RIG-I leading to their activation and a functional innate immune response. Core component of the SHOC2-MRAS-PP1c (SMP) holophosphatase complex that regulates the MAPK pathway activation. The SMP complex specifically dephosphorylates the inhibitory phosphorylation at 'Ser-259' of RAF1 kinase, 'Ser-365' of BRAF kinase and 'Ser-214' of ARAF kinase, stimulating their kinase activities. The SMP complex enhances the dephosphorylation activity and substrate specificity of PP1c. The sequence is that of Serine/threonine-protein phosphatase PP1-alpha catalytic subunit (PPP1CA) from Canis lupus familiaris (Dog).